A 360-amino-acid polypeptide reads, in one-letter code: UDP-N-acetylglucosamine--N-acetylmuramyl-(pentapeptide) pyrophosphoryl-undecaprenol N-acetylglucosamine transferase (360 aa).

UDP-N-acetyl-alpha-D-glucosamine is bound by residues 13–15 (TGG), asparagine 125, arginine 164, serine 191, and glutamine 290.

This sequence belongs to the glycosyltransferase 28 family. MurG subfamily.

The protein resides in the cell inner membrane. The enzyme catalyses di-trans,octa-cis-undecaprenyl diphospho-N-acetyl-alpha-D-muramoyl-L-alanyl-D-glutamyl-meso-2,6-diaminopimeloyl-D-alanyl-D-alanine + UDP-N-acetyl-alpha-D-glucosamine = di-trans,octa-cis-undecaprenyl diphospho-[N-acetyl-alpha-D-glucosaminyl-(1-&gt;4)]-N-acetyl-alpha-D-muramoyl-L-alanyl-D-glutamyl-meso-2,6-diaminopimeloyl-D-alanyl-D-alanine + UDP + H(+). It functions in the pathway cell wall biogenesis; peptidoglycan biosynthesis. Cell wall formation. Catalyzes the transfer of a GlcNAc subunit on undecaprenyl-pyrophosphoryl-MurNAc-pentapeptide (lipid intermediate I) to form undecaprenyl-pyrophosphoryl-MurNAc-(pentapeptide)GlcNAc (lipid intermediate II). The protein is UDP-N-acetylglucosamine--N-acetylmuramyl-(pentapeptide) pyrophosphoryl-undecaprenol N-acetylglucosamine transferase of Hahella chejuensis (strain KCTC 2396).